Reading from the N-terminus, the 360-residue chain is Homeobox-leucine zipper protein HOX21 (360 aa).

2 disordered regions span residues Gln-25–Gln-75 and Met-88–Arg-126. Residues His-36–Leu-55 show a composition bias toward basic residues. The span at Gly-56–Pro-68 shows a compositional bias: pro residues. Residues Gly-97–Gly-109 are compositionally biased toward gly residues. Residues Ala-121–Gln-180 constitute a DNA-binding region (homeobox). The leucine-zipper stretch occupies residues Lys-179–Ser-223. Disordered stretches follow at residues Glu-233–Gly-278 and Gly-299–Gln-328. Over residues Ala-234 to Ile-246 the composition is skewed to polar residues.

Belongs to the HD-ZIP homeobox family. Class I subfamily. As to expression, expressed in seedlings, roots, stems, leaf blades and panicles.

It localises to the nucleus. Functionally, probable transcription factor. This chain is Homeobox-leucine zipper protein HOX21 (HOX21), found in Oryza sativa subsp. indica (Rice).